The primary structure comprises 498 residues: ATP synthase subunit beta, chloroplastic (498 aa).

172 to 179 is an ATP binding site; the sequence is GGAGVGKT.

Belongs to the ATPase alpha/beta chains family. As to quaternary structure, F-type ATPases have 2 components, CF(1) - the catalytic core - and CF(0) - the membrane proton channel. CF(1) has five subunits: alpha(3), beta(3), gamma(1), delta(1), epsilon(1). CF(0) has four main subunits: a(1), b(1), b'(1) and c(9-12).

The protein localises to the plastid. Its subcellular location is the chloroplast thylakoid membrane. It catalyses the reaction ATP + H2O + 4 H(+)(in) = ADP + phosphate + 5 H(+)(out). In terms of biological role, produces ATP from ADP in the presence of a proton gradient across the membrane. The catalytic sites are hosted primarily by the beta subunits. This Aristolochia macrophylla (Dutchman's pipe vine) protein is ATP synthase subunit beta, chloroplastic.